The chain runs to 148 residues: Holo-[acyl-carrier-protein] synthase (148 aa).

Mg(2+) contacts are provided by Asp8 and Glu57.

It belongs to the P-Pant transferase superfamily. AcpS family. Mg(2+) serves as cofactor.

Its subcellular location is the cytoplasm. It catalyses the reaction apo-[ACP] + CoA = holo-[ACP] + adenosine 3',5'-bisphosphate + H(+). Functionally, transfers the 4'-phosphopantetheine moiety from coenzyme A to a Ser of acyl-carrier-protein. This chain is Holo-[acyl-carrier-protein] synthase, found in Ruegeria pomeroyi (strain ATCC 700808 / DSM 15171 / DSS-3) (Silicibacter pomeroyi).